Consider the following 157-residue polypeptide: Protein-export protein SecB (157 aa).

Belongs to the SecB family. Homotetramer, a dimer of dimers. One homotetramer interacts with 1 SecA dimer.

The protein resides in the cytoplasm. In terms of biological role, one of the proteins required for the normal export of preproteins out of the cell cytoplasm. It is a molecular chaperone that binds to a subset of precursor proteins, maintaining them in a translocation-competent state. It also specifically binds to its receptor SecA. The chain is Protein-export protein SecB from Shewanella oneidensis (strain ATCC 700550 / JCM 31522 / CIP 106686 / LMG 19005 / NCIMB 14063 / MR-1).